We begin with the raw amino-acid sequence, 426 residues long: Phosphomethylpyrimidine synthase (426 aa).

Residues N65, M94, Y123, H162, 184–186 (SRG), 225–228 (DGMR), and E264 contribute to the substrate site. Position 268 (H268) interacts with Zn(2+). Y291 is a substrate binding site. A Zn(2+)-binding site is contributed by H332. [4Fe-4S] cluster is bound by residues C408, C411, and C415.

This sequence belongs to the ThiC family. [4Fe-4S] cluster is required as a cofactor.

The catalysed reaction is 5-amino-1-(5-phospho-beta-D-ribosyl)imidazole + S-adenosyl-L-methionine = 4-amino-2-methyl-5-(phosphooxymethyl)pyrimidine + CO + 5'-deoxyadenosine + formate + L-methionine + 3 H(+). Its pathway is cofactor biosynthesis; thiamine diphosphate biosynthesis. In terms of biological role, catalyzes the synthesis of the hydroxymethylpyrimidine phosphate (HMP-P) moiety of thiamine from aminoimidazole ribotide (AIR) in a radical S-adenosyl-L-methionine (SAM)-dependent reaction. The polypeptide is Phosphomethylpyrimidine synthase (Methanococcus maripaludis (strain C5 / ATCC BAA-1333)).